We begin with the raw amino-acid sequence, 507 residues long: Maturase K (507 aa).

This sequence belongs to the intron maturase 2 family. MatK subfamily.

The protein localises to the plastid. Its subcellular location is the chloroplast. In terms of biological role, usually encoded in the trnK tRNA gene intron. Probably assists in splicing its own and other chloroplast group II introns. This is Maturase K from Cupaniopsis anacardioides (Carrotwood).